The sequence spans 104 residues: UPF0147 protein MK1586 (104 aa).

The protein belongs to the UPF0147 family.

In Methanopyrus kandleri (strain AV19 / DSM 6324 / JCM 9639 / NBRC 100938), this protein is UPF0147 protein MK1586.